A 517-amino-acid polypeptide reads, in one-letter code: Crotonobetaine/carnitine--CoA ligase (517 aa).

Belongs to the ATP-dependent AMP-binding enzyme family.

It catalyses the reaction 4-(trimethylamino)butanoate + ATP + CoA = 4-(trimethylamino)butanoyl-CoA + AMP + diphosphate. The catalysed reaction is crotonobetaine + ATP + CoA = crotonobetainyl-CoA + AMP + diphosphate. The enzyme catalyses (R)-carnitine + ATP + CoA = (R)-carnitinyl-CoA + AMP + diphosphate. Its pathway is amine and polyamine metabolism; carnitine metabolism. Functionally, catalyzes the transfer of CoA to carnitine, generating the initial carnitinyl-CoA needed for the CaiB reaction cycle. Also has activity toward crotonobetaine and gamma-butyrobetaine. This is Crotonobetaine/carnitine--CoA ligase from Citrobacter koseri (strain ATCC BAA-895 / CDC 4225-83 / SGSC4696).